Reading from the N-terminus, the 244-residue chain is MRKITFIAALLSLLPRYALAMHVMEGFLPFKWCLLWYSIYIPFLMAGLIYIKKNIAEEPSKKILLGFAGAFVFALSALKLPSVAGSSSHPTGIGLGAILLGPLPMAVIGGIVLLFQALLLAHGGITTLGANAFSMAVAGSFAAYGLYKVAGRVGLSKSASVFLGAASGDLMTYIITSLQLALAFPASRGGVAASFAGFSGIFAVTQLPLAIGEGILTVIVLNLLEIHAGVVVGRLVKGASNDEG.

The first 20 residues, 1 to 20 (MRKITFIAALLSLLPRYALA), serve as a signal peptide directing secretion. The next 6 helical transmembrane spans lie at 31-51 (KWCLLWYSIYIPFLMAGLIYI), 63-83 (ILLGFAGAFVFALSALKLPSV), 95-115 (LGAILLGPLPMAVIGGIVLLF), 117-137 (ALLLAHGGITTLGANAFSMAV), 161-181 (VFLGAASGDLMTYIITSLQLA), and 201-221 (IFAVTQLPLAIGEGILTVIVL).

It belongs to the CbiM family. Forms an energy-coupling factor (ECF) transporter complex composed of an ATP-binding protein (A component, CbiO), a transmembrane protein (T component, CbiQ) and 2 possible substrate-capture proteins (S components, CbiM and CbiN) of unknown stoichimetry.

The protein localises to the cell membrane. It participates in cofactor biosynthesis; adenosylcobalamin biosynthesis. Part of the energy-coupling factor (ECF) transporter complex CbiMNOQ involved in cobalt import. The chain is Cobalt transport protein CbiM from Thermosediminibacter oceani (strain ATCC BAA-1034 / DSM 16646 / JW/IW-1228P).